The sequence spans 179 residues: Segregation and condensation protein B (179 aa).

It belongs to the ScpB family. Homodimer. Homodimerization may be required to stabilize the binding of ScpA to the Smc head domains. Component of a cohesin-like complex composed of ScpA, ScpB and the Smc homodimer, in which ScpA and ScpB bind to the head domain of Smc. The presence of the three proteins is required for the association of the complex with DNA.

The protein localises to the cytoplasm. Its function is as follows. Participates in chromosomal partition during cell division. May act via the formation of a condensin-like complex containing Smc and ScpA that pull DNA away from mid-cell into both cell halves. This chain is Segregation and condensation protein B, found in Streptococcus equi subsp. equi (strain 4047).